An 833-amino-acid chain; its full sequence is Enhancer of filamentation 1 (833 aa).

Positions 3 to 65 (ARNLMARALY…PGNRVKLLIG (63 aa)) constitute an SH3 domain. Residues Tyr91, Tyr163, Tyr165, Tyr176, Tyr188, Tyr213, and Tyr222 each carry the phosphotyrosine modification. A disordered region spans residues 237–258 (EKEYDFPPPMKQDGKPDTRPEG). Residues 248 to 258 (QDGKPDTRPEG) show a composition bias toward basic and acidic residues. Ser295 is modified (phosphoserine). Disordered regions lie at residues 297–316 (SLHHAPSQLGQSGDTQSDAY), 326–403 (EVPT…RLRL), and 560–623 (PANS…SERS). The segment covering 304-314 (QLGQSGDTQSD) has biased composition (polar residues). The residue at position 316 (Tyr316) is a Phosphotyrosine. Over residues 331-343 (TSEKANPEERDGV) the composition is skewed to basic and acidic residues. An interacts with CTTN region spans residues 350–833 (NPADAKGSRD…KRSLLEMATF (484 aa)). The Caspase cleavage related site signature appears at 359–362 (DVVD). Ser368 is modified (phosphoserine). Residues 368–396 (SFSSTGSTRSNMSTSSTSSKESSLSASPS) show a composition bias toward low complexity. Residues 564-586 (HLKNGPNSIMNSSEYTHPGSQMQ) show a composition bias toward polar residues. Residues 709–759 (FYYDQCETHFISLLNAIDALFSCVSSAQPPRIFVAHSKFVILSAHKLVFIG) form a divergent helix-loop-helix motif region. Positions 709-833 (FYYDQCETHF…KRSLLEMATF (125 aa)) are required for interaction with PLK1. Residue Ser779 is modified to Phosphoserine. Phosphothreonine is present on Thr803.

Belongs to the CAS family. Homodimer. Forms heterodimers with BCAR1/p130cas. Forms complexes with PTK2B/RAFTK, adapter protein CRKL and LYN kinase. Part of a complex composed of NEDD9, AURKA and CTTN; within the complex NEDD9 acts as a scaffold protein and is required for complex formation. Part of a ternary complex composed of SMAD3, ITCH/AIP4 and NEDD9/HEF1; within the complex NEDD9/HEF1 interacts (via N-terminus) with ITCH/AIP4 (via WW domains); the complex mediates ubiquitination and proteasomal degradation of NEDD9/HEF1. Interacts with SMAD3; the interaction promotes NEDD9 ubiquitination and proteasomal degradation. Interacts with ID2. Interacts with CTTN (via N-terminus). Interacts with MICAL. Interacts with TXNL4/DIM1. Interacts with BCAR3 (via Ras-GEF domain). Interacts with SH2D3C isoform 1 and isoform 2. Interacts with ECT2. Interacts with PTPN11/SHP-2 (via SH2 domains); the interaction is enhanced when NEDD9/CAS-L is tyrosine phosphorylated. Interacts (via C-terminus) with PLK1 (via polo box domains). Interacts with NKX2-5. Interacts with SMAD3; the interaction is inhibited by oxidation of NEDD9. Interacts with NEDD9/HEF1; interaction is induced by CXCL12 promotion of ABL-mediated phosphorylation of NEDD9/HEF1. Interacts (via SH3 domain) with PTK2/FAK. Interacts with FYN; in the presence of PTK2. Interacts with INPPL1/SHIP2. Polyubiquitinated by ITCH/AIP4, leading to proteasomal degradation. In terms of processing, PTK2/FAK1 phosphorylates the protein at the YDYVHL motif (conserved among all cas proteins) following integrin stimulation. The SRC family kinases (FYN, SRC, LCK and CRK) are recruited to the phosphorylated sites and can phosphorylate other tyrosine residues. Ligation of either integrin beta-1 or B-cell antigen receptor on tonsillar B-cells and B-cell lines promotes tyrosine phosphorylation and both integrin and BCR-mediated tyrosine phosphorylation requires an intact actin network. Phosphorylation is required to recruit NEDD9 to T-cell receptor microclusters at the periphery of newly formed immunological synapses. In fibroblasts transformation with oncogene v-ABL results in an increase in tyrosine phosphorylation. Transiently phosphorylated following CD3 cross-linking and this phosphorylated form binds to CRKL and C3G. A mutant lacking the SH3 domain is phosphorylated upon CD3 cross-linking but not upon integrin beta-1 cross-linking. Tyrosine phosphorylation occurs upon stimulation of the G-protein coupled C1a calcitonin receptor. Calcitonin-stimulated tyrosine phosphorylation is mediated by calcium- and protein kinase C-dependent mechanisms and requires the integrity of the actin cytoskeleton. Phosphorylation at Ser-368 induces proteasomal degradation. Phosphorylated by LYN. Phosphorylation at Ser-779 by CSNK1D or CSNK1E, or phosphorylation of Thr-803 by CSNK1E enhances the interaction of NEDD9 with PLK1. As to expression, expressed in splenic lymphocytes (at protein level). Expressed in T-cells (at protein level). Expressed in the thymus. Expressed throughout the brain however particularly abundant in the cortex and hippocampus.

It localises to the cytoplasm. The protein resides in the cell cortex. It is found in the nucleus. The protein localises to the golgi apparatus. Its subcellular location is the cell projection. It localises to the lamellipodium. The protein resides in the cell junction. It is found in the focal adhesion. The protein localises to the cytoskeleton. Its subcellular location is the spindle pole. It localises to the cilium. The protein resides in the cilium basal body. It is found in the basolateral cell membrane. Functionally, scaffolding protein which plays a central coordinating role for tyrosine-kinase-based signaling related to cell adhesion. As a focal adhesion protein, plays a role in embryonic fibroblast migration. May play an important role in integrin beta-1 or B cell antigen receptor (BCR) mediated signaling in B- and T-cells. Integrin beta-1 stimulation leads to recruitment of various proteins including CRKl and SHPTP2 to the tyrosine phosphorylated form. Promotes adhesion and migration of lymphocytes; as a result required for the correct migration of lymphocytes to the spleen and other secondary lymphoid organs. Plays a role in the organization of T-cell F-actin cortical cytoskeleton and the centralization of T-cell receptor microclusters at the immunological synapse. Negatively regulates cilia outgrowth in polarized cysts. Modulates cilia disassembly via activation of AURKA-mediated phosphorylation of HDAC6 and subsequent deacetylation of alpha-tubulin. Positively regulates RANKL-induced osteoclastogenesis. Required for the maintenance of hippocampal dendritic spines in the dentate gyrus and CA1 regions, thereby involved in spatial learning and memory. In Mus musculus (Mouse), this protein is Enhancer of filamentation 1.